A 421-amino-acid polypeptide reads, in one-letter code: Medium-chain specific acyl-CoA dehydrogenase, mitochondrial (421 aa).

A mitochondrion-targeting transit peptide spans 1-25 (MAAAFGRCCRVLRSISRFHWRSQHT). Lysine 69 is modified (N6-acetyllysine; alternate). Lysine 69 is modified (N6-succinyllysine; alternate). An FAD-binding site is contributed by 158-167 (YCVTEPGAGS). Residue serine 167 participates in octanoyl-CoA binding. Lysine 179 carries the post-translational modification N6-succinyllysine. 191–193 (WIT) contributes to the FAD binding site. Residues lysine 212, lysine 217, lysine 259, and lysine 271 each carry the N6-acetyllysine; alternate modification. An N6-succinyllysine; alternate mark is found at lysine 212, lysine 217, lysine 259, and lysine 271. Residue aspartate 278 coordinates octanoyl-CoA. At lysine 279 the chain carries N6-acetyllysine. Arginine 281 provides a ligand contact to octanoyl-CoA. An N6-acetyllysine modification is found at lysine 301. FAD-binding positions include 306–308 (RKT) and 316–317 (HQ). 2 residues coordinate octanoyl-CoA: arginine 349 and threonine 351. At threonine 351 the chain carries Phosphothreonine. 374–378 (QIFGG) lines the FAD pocket. Glutamate 401 is an octanoyl-CoA binding site. Glutamate 401 serves as the catalytic Proton acceptor. 402–405 (GTSQ) is an FAD binding site.

It belongs to the acyl-CoA dehydrogenase family. Homotetramer. Interacts with the heterodimeric electron transfer flavoprotein ETF. FAD serves as cofactor. Acetylated. Could occur at proximity of the cofactor-binding sites and reduce the catalytic activity. Could be deacetylated by SIRT3.

It is found in the mitochondrion matrix. The enzyme catalyses a medium-chain 2,3-saturated fatty acyl-CoA + oxidized [electron-transfer flavoprotein] + H(+) = a medium-chain (2E)-enoyl-CoA + reduced [electron-transfer flavoprotein]. It carries out the reaction pentanoyl-CoA + oxidized [electron-transfer flavoprotein] + H(+) = (2E)-pentenoyl-CoA + reduced [electron-transfer flavoprotein]. The catalysed reaction is hexanoyl-CoA + oxidized [electron-transfer flavoprotein] + H(+) = (2E)-hexenoyl-CoA + reduced [electron-transfer flavoprotein]. It catalyses the reaction octanoyl-CoA + oxidized [electron-transfer flavoprotein] + H(+) = (2E)-octenoyl-CoA + reduced [electron-transfer flavoprotein]. The enzyme catalyses decanoyl-CoA + oxidized [electron-transfer flavoprotein] + H(+) = (2E)-decenoyl-CoA + reduced [electron-transfer flavoprotein]. It carries out the reaction dodecanoyl-CoA + oxidized [electron-transfer flavoprotein] + H(+) = (2E)-dodecenoyl-CoA + reduced [electron-transfer flavoprotein]. The catalysed reaction is tetradecanoyl-CoA + oxidized [electron-transfer flavoprotein] + H(+) = (2E)-tetradecenoyl-CoA + reduced [electron-transfer flavoprotein]. It catalyses the reaction oxidized [electron-transfer flavoprotein] + hexadecanoyl-CoA + H(+) = (2E)-hexadecenoyl-CoA + reduced [electron-transfer flavoprotein]. The protein operates within lipid metabolism; mitochondrial fatty acid beta-oxidation. In terms of biological role, medium-chain specific acyl-CoA dehydrogenase is one of the acyl-CoA dehydrogenases that catalyze the first step of mitochondrial fatty acid beta-oxidation, an aerobic process breaking down fatty acids into acetyl-CoA and allowing the production of energy from fats. The first step of fatty acid beta-oxidation consists in the removal of one hydrogen from C-2 and C-3 of the straight-chain fatty acyl-CoA thioester, resulting in the formation of trans-2-enoyl-CoA. Electron transfer flavoprotein (ETF) is the electron acceptor that transfers electrons to the main mitochondrial respiratory chain via ETF-ubiquinone oxidoreductase (ETF dehydrogenase). Among the different mitochondrial acyl-CoA dehydrogenases, medium-chain specific acyl-CoA dehydrogenase acts specifically on acyl-CoAs with saturated 6 to 12 carbons long primary chains. The polypeptide is Medium-chain specific acyl-CoA dehydrogenase, mitochondrial (Macaca fascicularis (Crab-eating macaque)).